The following is a 987-amino-acid chain: Ephrin type-B receptor 4 (987 aa).

Positions 1-15 are cleaved as a signal peptide; sequence MELRALLCWASLATA. Residues 16–539 are Extracellular-facing; that stretch reads LEETLLNTKL…ESESWREQLA (524 aa). An Eph LBD domain is found at 17–202; that stretch reads EETLLNTKLE…FYKKCSWLIT (186 aa). 2 disulfide bridges follow: C61/C184 and C97/C107. 3 N-linked (GlcNAc...) asparagine glycosylation sites follow: N203, N335, and N426. Fibronectin type-III domains follow at residues 323–432 and 436–529; these read PPSA…TDRE and AVSD…TQLD. The chain crosses the membrane as a helical span at residues 540–560; sequence LIAGTAVVGVVLVLVVVIIAV. Residues 561–987 are Cytoplasmic-facing; sequence LCLRKQSNGR…GGTGGPAQQF (427 aa). The Protein kinase domain maps to 615-899; the sequence is VKIEEVIGAG…ENGGASHPLL (285 aa). ATP-binding positions include 621-629 and K647; that span reads IGAGEFGEV. D740 functions as the Proton acceptor in the catalytic mechanism. 4 positions are modified to phosphoserine: S769, S770, S911, and S943. Positions 907–971 constitute an SAM domain; sequence SAFGSVGEWL…LASVQHMKSQ (65 aa). The interval 965-987 is disordered; the sequence is VQHMKSQAKPGAPGGTGGPAQQF. Residues 976–987 are compositionally biased toward gly residues; it reads APGGTGGPAQQF. Residues 985–987 carry the PDZ-binding motif; sequence QQF.

Belongs to the protein kinase superfamily. Tyr protein kinase family. Ephrin receptor subfamily. As to quaternary structure, heterotetramer upon binding of the ligand. The heterotetramer is composed of an ephrin dimer and a receptor dimer. Oligomerization is probably required to induce biological responses. Interacts with RASA1; the interaction depends on EPHB4 tyrosine-phosphorylation. In terms of processing, phosphorylated; autophosphorylation is stimulated by EFNB2. In terms of tissue distribution, expressed in various organ systems, including lung, liver, kidney, intestine, muscle and heart. Expressed in myogenic progenitor cells.

It localises to the cell membrane. The catalysed reaction is L-tyrosyl-[protein] + ATP = O-phospho-L-tyrosyl-[protein] + ADP + H(+). In terms of biological role, receptor tyrosine kinase which binds promiscuously transmembrane ephrin-B family ligands residing on adjacent cells, leading to contact-dependent bidirectional signaling into neighboring cells. The signaling pathway downstream of the receptor is referred to as forward signaling while the signaling pathway downstream of the ephrin ligand is referred to as reverse signaling. Together with its cognate ligand/functional ligand EFNB2 it is involved in the regulation of cell adhesion and migration, and plays a central role in heart morphogenesis, angiogenesis and blood vessel remodeling and permeability. EPHB4-mediated forward signaling controls cellular repulsion and segregation from EFNB2-expressing cells. This Mus musculus (Mouse) protein is Ephrin type-B receptor 4 (Ephb4).